The following is a 594-amino-acid chain: Glutamate decarboxylase 1 (594 aa).

The span at 1–13 (MASSTPSSSATSS) shows a compositional bias: low complexity. The tract at residues 1–25 (MASSTPSSSATSSNAGPDPNTTNLR) is disordered. Residue S78 is modified to Phosphoserine. Residue 190-192 (QLS) participates in 4-aminobutanoate binding. K405 is subject to N6-(pyridoxal phosphate)lysine. R567 contacts 4-aminobutanoate.

The protein belongs to the group II decarboxylase family. In terms of assembly, homodimer. Pyridoxal 5'-phosphate is required as a cofactor.

It carries out the reaction L-glutamate + H(+) = 4-aminobutanoate + CO2. In terms of biological role, catalyzes the synthesis of the inhibitory neurotransmitter gamma-aminobutyric acid (GABA) with pyridoxal 5'-phosphate as cofactor. In Sus scrofa (Pig), this protein is Glutamate decarboxylase 1 (GAD1).